The chain runs to 252 residues: NAC domain-containing protein 23 (252 aa).

The NAC domain maps to 12-177 (MPPGFRFQPT…EMVLCRISNK (166 aa)). Residues 110–183 (TAVKRRFVFY…ISNKDLPKPP (74 aa)) mediate DNA binding. The interval 225–252 (VDDAAAADDDPGDLDEEIDDSMQRNHGG) is disordered. Acidic residues predominate over residues 229 to 244 (AAADDDPGDLDEEIDD).

In terms of assembly, forms heterodimers with NAC26. As to expression, expressed in stems and panicles. Expressed in developing seeds.

The protein localises to the nucleus. It localises to the cytoplasm. Its function is as follows. Transcription factor involved in the regulation of seed size. Possesses transactivation activity in yeast. The protein is NAC domain-containing protein 23 of Oryza sativa subsp. indica (Rice).